Here is a 970-residue protein sequence, read N- to C-terminus: MGDYHEFTDQYKVPVIAKLLHALPHYNITFHKINSTFRPNDEIYLESLGILGSVPAALLIVSLLGLLFYLMTRCCDRKPRPAHSITSLKVALSIVTVMCCAAIGLGLYGNDDLHNGLLEVLTAGRKVDNLVTTIRNQTHILENTLTNRIRPQLVELADIFDQPVSNQTALSKLFVSLNIVQGNVTLATNAASDIRRPLMGISMTHFLTRGDQWELIRWPGTVATLALLLVLCAVLLVGVARHSRCALILFSVCGLLAVTGSWLMSGLYLSSSVAVGDLCISPADFLVSTAPRDLPTNVLLHYTQCEPGHTNPFTQRLRESQNSLNNARSAMATVMKISLVLFKSSGLQPKLGAVNADLNSSERLLTQLTALVDCKAVHHNFLAAARGLCEGGLLGLVLMLIASFIAAILLTIMVWVDSHTWIYIRKRNDYAQVDEPSYISHPAPQNHQQMMNAARTLPRNHNGHFSPPVISGSHTLQHPSKRQQHEMMAHAHIQQNMRAMGTHTLGRLPSHNHSPTHMTGPNNAAAVAAAANAAANMPPTTQAAQQQQQQQAQQQQQQAQQQLGGPQPIYCHHPHQHPHPHPHQHPHSHSAAAVAAAVQHQHAIYHQQQAQQYGTYTTAAHHAPHHLGPGQSQIYQQIPAHLAPQLAANGNPHSIYQPLVAVSQGSIYVSNMATMRRQNSQGGPQIPAHQHPPSLHQQQQQPPPPSQQQQQLHQLKSPQQHQQQLQQHQQQQQQQHHQQQHHQQQHQQQQQQHHQQQQPNESDVVPISTAMDTAIYDRDKQIYKCSTLRQGGKFDPKYKPSILNCPLPEIPKDAEQPKVESIYEQRQQAHHQNYSKTLQRPPMMLPPQMKAIPPPRIGTPTSPPPPVAQPLNESNGGVPSGLQNGGAVVGGGGANANEDTSLPPPPLEAQTEATKARMGAGPAANGKVLHNGGGGGSVGGGGGGAVDDDDDLPPPPPAITDESNYAVTEL.

The Extracellular segment spans residues 1-47 (MGDYHEFTDQYKVPVIAKLLHALPHYNITFHKINSTFRPNDEIYLES). N-linked (GlcNAc...) asparagine glycosylation is found at asparagine 27 and asparagine 34. A helical transmembrane segment spans residues 48-68 (LGILGSVPAALLIVSLLGLLF). Topologically, residues 69 to 89 (YLMTRCCDRKPRPAHSITSLK) are cytoplasmic. The chain crosses the membrane as a helical span at residues 90 to 110 (VALSIVTVMCCAAIGLGLYGN). At 111–219 (DDLHNGLLEV…GDQWELIRWP (109 aa)) the chain is on the extracellular side. N-linked (GlcNAc...) asparagine glycans are attached at residues asparagine 136, asparagine 166, and asparagine 183. Residues 220–240 (GTVATLALLLVLCAVLLVGVA) traverse the membrane as a helical segment. Topologically, residues 241 to 246 (RHSRCA) are cytoplasmic. A helical transmembrane segment spans residues 247-267 (LILFSVCGLLAVTGSWLMSGL). Residues 268 to 395 (YLSSSVAVGD…RGLCEGGLLG (128 aa)) lie on the Extracellular side of the membrane. Asparagine 359 carries an N-linked (GlcNAc...) asparagine glycan. A helical transmembrane segment spans residues 396 to 416 (LVLMLIASFIAAILLTIMVWV). Residues 417-970 (DSHTWIYIRK…DESNYAVTEL (554 aa)) are Cytoplasmic-facing. A compositionally biased stretch (low complexity) spans 532 to 571 (NAAANMPPTTQAAQQQQQQQAQQQQQQAQQQLGGPQPIYC). Disordered stretches follow at residues 532-587 (NAAA…QHPH), 677-763 (RQNS…NESD), and 849-970 (MKAI…VTEL). Over residues 572 to 587 (HHPHQHPHPHPHQHPH) the composition is skewed to basic residues. 3 stretches are compositionally biased toward low complexity: residues 689 to 700 (HQHPPSLHQQQQ), 707 to 737 (QQQQ…QQHH), and 745 to 759 (QHQQ…QQQP). Residues 852–868 (IPPPRIGTPTSPPPPVA) are compositionally biased toward pro residues. Gly residues-rich tracts occupy residues 883–894 (QNGGAVVGGGGA) and 931–945 (NGGG…GGGA). Polar residues predominate over residues 961–970 (DESNYAVTEL).

This sequence belongs to the tweety family.

It localises to the cell membrane. Functionally, non-essential protein that probably acts as a chloride channel. The sequence is that of Protein tweety (tty) from Drosophila melanogaster (Fruit fly).